The following is a 296-amino-acid chain: Nucleotide-binding protein SPT_1506 (296 aa).

13–20 (GMSGAGKT) is a binding site for ATP. GTP is bound at residue 63–66 (DMRS).

The protein belongs to the RapZ-like family.

Functionally, displays ATPase and GTPase activities. In Streptococcus pneumoniae (strain Taiwan19F-14), this protein is Nucleotide-binding protein SPT_1506.